Consider the following 152-residue polypeptide: Transcriptional regulator MraZ (152 aa).

SpoVT-AbrB domains are found at residues 5-52 (TSAI…PLPE) and 81-124 (ASDC…HDTA).

This sequence belongs to the MraZ family. In terms of assembly, forms oligomers.

It is found in the cytoplasm. The protein resides in the nucleoid. The chain is Transcriptional regulator MraZ from Colwellia psychrerythraea (strain 34H / ATCC BAA-681) (Vibrio psychroerythus).